Here is a 363-residue protein sequence, read N- to C-terminus: tRNA N6-adenosine threonylcarbamoyltransferase (363 aa).

2 residues coordinate Fe cation: histidine 121 and histidine 125. Substrate is bound by residues 143 to 147 (LASGG), aspartate 176, glycine 189, and asparagine 287. Aspartate 315 contributes to the Fe cation binding site.

Belongs to the KAE1 / TsaD family. The cofactor is Fe(2+).

The protein localises to the cytoplasm. The catalysed reaction is L-threonylcarbamoyladenylate + adenosine(37) in tRNA = N(6)-L-threonylcarbamoyladenosine(37) in tRNA + AMP + H(+). Required for the formation of a threonylcarbamoyl group on adenosine at position 37 (t(6)A37) in tRNAs that read codons beginning with adenine. Is involved in the transfer of the threonylcarbamoyl moiety of threonylcarbamoyl-AMP (TC-AMP) to the N6 group of A37, together with TsaE and TsaB. TsaD likely plays a direct catalytic role in this reaction. The sequence is that of tRNA N6-adenosine threonylcarbamoyltransferase from Rhodopseudomonas palustris (strain BisA53).